A 426-amino-acid chain; its full sequence is 4-hydroxy-3-methylbut-2-en-1-yl diphosphate synthase (flavodoxin) (426 aa).

[4Fe-4S] cluster is bound by residues Cys310, Cys313, Cys356, and Glu363.

It belongs to the IspG family. The cofactor is [4Fe-4S] cluster.

The enzyme catalyses (2E)-4-hydroxy-3-methylbut-2-enyl diphosphate + oxidized [flavodoxin] + H2O + 2 H(+) = 2-C-methyl-D-erythritol 2,4-cyclic diphosphate + reduced [flavodoxin]. It participates in isoprenoid biosynthesis; isopentenyl diphosphate biosynthesis via DXP pathway; isopentenyl diphosphate from 1-deoxy-D-xylulose 5-phosphate: step 5/6. In terms of biological role, converts 2C-methyl-D-erythritol 2,4-cyclodiphosphate (ME-2,4cPP) into 1-hydroxy-2-methyl-2-(E)-butenyl 4-diphosphate. The protein is 4-hydroxy-3-methylbut-2-en-1-yl diphosphate synthase (flavodoxin) of Rhodopseudomonas palustris (strain BisA53).